The sequence spans 103 residues: Large ribosomal subunit protein bL21 (103 aa).

It belongs to the bacterial ribosomal protein bL21 family. As to quaternary structure, part of the 50S ribosomal subunit. Contacts protein L20.

Its function is as follows. This protein binds to 23S rRNA in the presence of protein L20. The chain is Large ribosomal subunit protein bL21 from Ralstonia nicotianae (strain ATCC BAA-1114 / GMI1000) (Ralstonia solanacearum).